The chain runs to 447 residues: Serine/threonine-protein phosphatase 2A 55 kDa regulatory subunit B alpha isoform (447 aa).

Ala-2 carries the N-acetylalanine modification. WD repeat units follow at residues 11–80 (QWCF…FQSH), 94–174 (EKIN…IFAN), 175–218 (AHTY…VDIK), 227–270 (EVIT…KLFE), 288–325 (ISDVKFSHSGRYMMTRDYLSVKIWDLNMENRPVETYQV), 347–381 (ECCWNGSDSVVMTGSYNNFFRMFDRNTKRDITLEA), and 414–446 (DFNKKILHTAWHPKENIIAVATTNNLYIFQDKV).

It belongs to the phosphatase 2A regulatory subunit B family. As to quaternary structure, PP2A consists of a common heterodimeric core enzyme, composed of a 36 kDa catalytic subunit (subunit C) and a 65 kDa constant regulatory subunit (PR65 or subunit A), that associates with a variety of regulatory subunits. Proteins that associate with the core dimer include three families of regulatory subunits B (the R2/B/PR55/B55, R3/B''/PR72/PR130/PR59 and R5/B'/B56 families), the 48 kDa variable regulatory subunit, viral proteins, and cell signaling molecules. Interacts with the PP2A C catalytic subunit PPP2CA. Interacts with the PP2A A subunit PPP2R1A. Interacts with TP53. Interacts with IER5. Interacts with MFHAS1; the interaction is direct. Interacts with PABIR1/FAM122A (via its N-terminus); the interaction is direct and inhibits PP2A activity. Interacts with ARPP19; the interaction is direct and inhibits PP2A activity. Interacts with CRTC3. As to expression, expressed in all tissues examined.

In terms of biological role, substrate-recognition subunit of protein phosphatase 2A (PP2A) that plays a key role in cell cycle by controlling mitosis entry and exit. Involved in chromosome clustering during late mitosis by mediating dephosphorylation of MKI67. Essential for serine/threonine-protein phosphatase 2A-mediated dephosphorylation of WEE1, preventing its ubiquitin-mediated proteolysis, increasing WEE1 protein levels, and promoting the G2/M checkpoint. The protein is Serine/threonine-protein phosphatase 2A 55 kDa regulatory subunit B alpha isoform (PPP2R2A) of Homo sapiens (Human).